The chain runs to 230 residues: Large ribosomal subunit protein uL1 (230 aa).

It belongs to the universal ribosomal protein uL1 family. As to quaternary structure, part of the 50S ribosomal subunit.

Binds directly to 23S rRNA. The L1 stalk is quite mobile in the ribosome, and is involved in E site tRNA release. Functionally, protein L1 is also a translational repressor protein, it controls the translation of the L11 operon by binding to its mRNA. This is Large ribosomal subunit protein uL1 from Bacillus cereus (strain G9842).